The sequence spans 156 residues: Small ribosomal subunit protein uS7 (156 aa).

This sequence belongs to the universal ribosomal protein uS7 family. Part of the 30S ribosomal subunit. Contacts proteins S9 and S11.

In terms of biological role, one of the primary rRNA binding proteins, it binds directly to 16S rRNA where it nucleates assembly of the head domain of the 30S subunit. Is located at the subunit interface close to the decoding center, probably blocks exit of the E-site tRNA. In Synechococcus sp. (strain WH7803), this protein is Small ribosomal subunit protein uS7.